Consider the following 399-residue polypeptide: Dual-specificity RNA methyltransferase RlmN (399 aa).

Glutamate 122 acts as the Proton acceptor in catalysis. In terms of domain architecture, Radical SAM core spans 128–371 (ETDRGTLCVS…VRTPRGRDIL (244 aa)). Cysteine 135 and cysteine 374 are disulfide-bonded. [4Fe-4S] cluster contacts are provided by cysteine 142, cysteine 146, and cysteine 149. Residues 200–201 (GE), serine 232, 254–256 (SLH), and asparagine 331 each bind S-adenosyl-L-methionine. Cysteine 374 functions as the S-methylcysteine intermediate in the catalytic mechanism.

The protein belongs to the radical SAM superfamily. RlmN family. It depends on [4Fe-4S] cluster as a cofactor.

It localises to the cytoplasm. It catalyses the reaction adenosine(2503) in 23S rRNA + 2 reduced [2Fe-2S]-[ferredoxin] + 2 S-adenosyl-L-methionine = 2-methyladenosine(2503) in 23S rRNA + 5'-deoxyadenosine + L-methionine + 2 oxidized [2Fe-2S]-[ferredoxin] + S-adenosyl-L-homocysteine. The enzyme catalyses adenosine(37) in tRNA + 2 reduced [2Fe-2S]-[ferredoxin] + 2 S-adenosyl-L-methionine = 2-methyladenosine(37) in tRNA + 5'-deoxyadenosine + L-methionine + 2 oxidized [2Fe-2S]-[ferredoxin] + S-adenosyl-L-homocysteine. Specifically methylates position 2 of adenine 2503 in 23S rRNA and position 2 of adenine 37 in tRNAs. m2A2503 modification seems to play a crucial role in the proofreading step occurring at the peptidyl transferase center and thus would serve to optimize ribosomal fidelity. The protein is Dual-specificity RNA methyltransferase RlmN of Rhodopseudomonas palustris (strain HaA2).